The sequence spans 183 residues: ADP-ribosylation factor-like protein 5 (183 aa).

Residues 27-34 (GLNAAGKT), 70-74 (DLGGQ), and 129-132 (NKQD) contribute to the GTP site.

Belongs to the small GTPase superfamily. Arf family.

Its function is as follows. May bind and exchange GTP and GDP. This Dictyostelium discoideum (Social amoeba) protein is ADP-ribosylation factor-like protein 5 (arl5).